Here is a 190-residue protein sequence, read N- to C-terminus: Xanthine phosphoribosyltransferase (190 aa).

Residues Leu-20 and Asn-27 each contribute to the xanthine site. 129–133 (ANGRA) provides a ligand contact to 5-phospho-alpha-D-ribose 1-diphosphate. A xanthine-binding site is contributed by Lys-157.

Belongs to the purine/pyrimidine phosphoribosyltransferase family. Xpt subfamily. Homodimer.

The protein localises to the cytoplasm. It catalyses the reaction XMP + diphosphate = xanthine + 5-phospho-alpha-D-ribose 1-diphosphate. Its pathway is purine metabolism; XMP biosynthesis via salvage pathway; XMP from xanthine: step 1/1. In terms of biological role, converts the preformed base xanthine, a product of nucleic acid breakdown, to xanthosine 5'-monophosphate (XMP), so it can be reused for RNA or DNA synthesis. The chain is Xanthine phosphoribosyltransferase from Clostridioides difficile (strain 630) (Peptoclostridium difficile).